We begin with the raw amino-acid sequence, 556 residues long: MAVRFLALGLLIFVTSCSGRRVCESQQSCDDEQCDETLNIAIVGAGPSGAYSAYKMRHSGKDVGLFEYCNRVGGRLYTYQLPNTPDVNLELGGMRYITGAHNILQEVTKELGLKSVLFTEGFGRPGRTRYFLRGQSLTHEEVQSGDVPYNLTTIEKLNQGRIYEYYLKELTGFDIGNGSISREQLLKLRVSDGRLLYQLTFDEALDLVASPEGKEFARDVHVFHTEVTSDANAVSVFDDHLGEDGAGDAILTVEEGMQKVPKELIKEFKKTSASNQVQLNKYLQAIRSKSDHSFVLYFRPTSTVDGKTTILDYRPLQRVCARQVILALPVFALRRLDWPPLHEGRAETAYAAVRNMAASKVFMTFDQAWWLDRNFTDNTAFVTKGDTPFSQMYDWKKSNVSGDYILIASYADGNNTLYQKVLRDQGESINGSEPGANRVSEPLKNNILDHLSEAYGVDRSTIPEPKTAVSQFWTDYPFGCGWITWRAGYHFDDVMSTMRRPSLKDEVYVVGADYSWGLMSSWTEGALETADAVLKDYFKGECAKPPSVDHLDSHMA.

The N-terminal stretch at 1–19 (MAVRFLALGLLIFVTSCSG) is a signal peptide. N-linked (GlcNAc...) asparagine glycosylation is found at N150, N177, N374, N399, N414, and N430.

The protein to A.fulica achacin protein. In terms of assembly, homotetramer. In terms of tissue distribution, albumen gland.

Functionally, has antibacterial activity against Gram-negative and Gram-positive bacteria. This chain is Aplysianin-A, found in Aplysia kurodai (Kuroda's sea hare).